The sequence spans 315 residues: Adenine deaminase (315 aa).

Residues His-14, His-16, and His-194 each coordinate Zn(2+). Glu-197 acts as the Proton donor in catalysis. Asp-275 contacts Zn(2+). Asp-276 is a binding site for substrate.

Belongs to the metallo-dependent hydrolases superfamily. Adenosine and AMP deaminases family. Adenine deaminase type 2 subfamily. The cofactor is Zn(2+).

The enzyme catalyses adenine + H2O + H(+) = hypoxanthine + NH4(+). Functionally, catalyzes the hydrolytic deamination of adenine to hypoxanthine. Plays an important role in the purine salvage pathway and in nitrogen catabolism. The sequence is that of Adenine deaminase from Pseudomonas putida (strain GB-1).